A 467-amino-acid chain; its full sequence is Mothers against decapentaplegic homolog 2 (467 aa).

Serine 2 bears the N-acetylserine mark. The residue at position 8 (threonine 8) is a Phosphothreonine; by MAPK3. An MH1 domain is found at 10–176 (PVVKRLLGWK…YQRVETPVLP (167 aa)). Lysine 19 carries the post-translational modification N6-acetyllysine. Residues cysteine 74, cysteine 149, cysteine 161, and histidine 166 each contribute to the Zn(2+) site. Residues 207 to 217 (PAGIEPQSNYI) show a composition bias toward polar residues. Positions 207-251 (PAGIEPQSNYIPETPPPGYISEDGETSDQQLNQSMDTGSPAELSP) are disordered. The residue at position 220 (threonine 220) is a Phosphothreonine. The PY-motif motif lies at 221–225 (PPPGY). Over residues 233-243 (SDQQLNQSMDT) the composition is skewed to polar residues. A Phosphoserine; by CAMK2 modification is found at serine 240. A phosphoserine mark is found at serine 245, serine 250, serine 255, serine 458, serine 460, and serine 464. An MH2 domain is found at 274–467 (WCSIAYYELN…SPSVRCSSMS (194 aa)). Phosphoserine; by TGFBR1 is present on residues serine 465 and serine 467.

This sequence belongs to the dwarfin/SMAD family. As to quaternary structure, monomer; in the absence of TGF-beta. Heterodimer; in the presence of TGF-beta. Forms a heterodimer with co-SMAD, SMAD4, in the nucleus to form the transactivation complex SMAD2/SMAD4. Found in a complex with SMAD3 and TRIM33 upon addition of TGF-beta. Identified in a complex that contains at least ZNF451, SMAD2, SMAD3 and SMAD4. Interacts (via the MH2 domain) with ZFYVE9; may form trimers with the SMAD4 co-SMAD. Interacts with TAZ/WWRT1. Interacts with FOXH1. Interacts with SNW1. Interacts with CREB-binding protein (CBP) and EP300. Interacts with SNON. Interacts with ALK4/ACVR1B. Interacts with SKOR1. Interacts with SKOR2. Interacts with PRDM16. Interacts (via MH2 domain) with LEMD3. Interacts with RBPMS. Interacts with WWP1. Interacts (dephosphorylated form, via the MH1 and MH2 domains) with RANBP3 (via its C-terminal R domain); the interaction results in the export of dephosphorylated SMAD3 out of the nucleus and termination of the TGF-beta signaling. Interacts with PDPK1 (via PH domain). Interacts with DAB2; the interactions are enhanced upon TGF-beta stimulation. Interacts with USP15. Interacts with PPP5C. Interacts with LDLRAD4 (via the SMAD interaction motif). Interacts (via MH2 domain) with PMEPA1 (via the SMAD interaction motif). Interacts with ZFHX3. Interacts with ZNF451. Interacts with SMURF2 when phosphorylated on Ser-465/467. Interacts with PPM1A. Interacts with TGF-beta. Interacts with TGFBR1. Interacts with TGIF. Interacts with SMAD3 and TRIM33. Interacts with ZNF580. Interacts with NEDD4L in response to TGF-beta. Interacts with HGS. Interacts with AIP1. Interacts with WWP1. Interacts with PML. Interacts weakly with ZNF8. Interacts (when phosphorylated) with RNF111; RNF111 acts as an enhancer of the transcriptional responses by mediating ubiquitination and degradation of SMAD2 inhibitors. Interacts with YAP1 (when phosphorylated at 'Ser-127'). Interacts when phosphorylated with IPO7; the interaction facilitates translocation of SMAD2 to the nucleus. Interacts with MTMR4; negatively regulates TGF-beta signaling through SMAD2 dephosphorylation and retention in endosomes. In terms of processing, phosphorylated on one or several of Thr-220, Ser-245, Ser-250, and Ser-255. In response to TGF-beta, phosphorylated on Ser-465/467 by TGF-beta and activin type 1 receptor kinases. TGF-beta-induced Ser-465/467 phosphorylation declines progressively in a KMT5A-dependent manner. Able to interact with SMURF2 when phosphorylated on Ser-465/467, recruiting other proteins, such as SNON, for degradation. In response to decorin, the naturally occurring inhibitor of TGF-beta signaling, phosphorylated on Ser-240 by CaMK2. Phosphorylated by MAPK3 upon EGF stimulation; which increases transcriptional activity and stability, and is blocked by calmodulin. Phosphorylated by PDPK1. In response to TGF-beta, ubiquitinated by NEDD4L; which promotes its degradation. Monoubiquitinated, leading to prevent DNA-binding. Deubiquitination by USP15 alleviates inhibition and promotes activation of TGF-beta target genes. Ubiquitinated by RNF111, leading to its degradation: only SMAD2 proteins that are 'in use' are targeted by RNF111, RNF111 playing a key role in activating SMAD2 and regulating its turnover. Post-translationally, acetylated on Lys-19 by coactivators in response to TGF-beta signaling, which increases transcriptional activity. Isoform short: Acetylation increases DNA binding activity in vitro and enhances its association with target promoters in vivo. Acetylation in the nucleus by EP300 is enhanced by TGF-beta. In terms of tissue distribution, expressed at high levels in skeletal muscle, endothelial cells, heart and placenta.

It is found in the cytoplasm. The protein resides in the nucleus. In terms of biological role, receptor-regulated SMAD (R-SMAD) that is an intracellular signal transducer and transcriptional modulator activated by TGF-beta (transforming growth factor) and activin type 1 receptor kinases. Binds the TRE element in the promoter region of many genes that are regulated by TGF-beta and, on formation of the SMAD2/SMAD4 complex, activates transcription. Promotes TGFB1-mediated transcription of odontoblastic differentiation genes in dental papilla cells. Positively regulates PDPK1 kinase activity by stimulating its dissociation from the 14-3-3 protein YWHAQ which acts as a negative regulator. May act as a tumor suppressor in colorectal carcinoma. The protein is Mothers against decapentaplegic homolog 2 (SMAD2) of Homo sapiens (Human).